The chain runs to 489 residues: Ribulose bisphosphate carboxylase large chain (489 aa).

Substrate-binding residues include Asn-128 and Thr-178. The Proton acceptor role is filled by Lys-180. Lys-182 contacts substrate. Mg(2+) contacts are provided by Lys-206, Asp-208, and Glu-209. N6-carboxylysine is present on Lys-206. His-298 serves as the catalytic Proton acceptor. Positions 299, 331, and 383 each coordinate substrate.

The protein belongs to the RuBisCO large chain family. Type I subfamily. As to quaternary structure, heterohexadecamer of 8 large chains and 8 small chains. Mg(2+) serves as cofactor.

It carries out the reaction 2 (2R)-3-phosphoglycerate + 2 H(+) = D-ribulose 1,5-bisphosphate + CO2 + H2O. It catalyses the reaction D-ribulose 1,5-bisphosphate + O2 = 2-phosphoglycolate + (2R)-3-phosphoglycerate + 2 H(+). Functionally, ruBisCO catalyzes two reactions: the carboxylation of D-ribulose 1,5-bisphosphate, the primary event in carbon dioxide fixation, as well as the oxidative fragmentation of the pentose substrate. Both reactions occur simultaneously and in competition at the same active site. The polypeptide is Ribulose bisphosphate carboxylase large chain (Nitrosospira sp. (strain 40KI)).